The following is a 235-amino-acid chain: Probable pyridoxal 5'-phosphate synthase subunit PDX1 (235 aa).

Lys-16 functions as the Schiff-base intermediate with D-ribose 5-phosphate in the catalytic mechanism. D-glyceraldehyde 3-phosphate is bound at residue Arg-104. D-ribose 5-phosphate is bound by residues Gly-153 and 174–175 (GS).

The protein belongs to the PdxS/SNZ family.

It catalyses the reaction aldehydo-D-ribose 5-phosphate + D-glyceraldehyde 3-phosphate + L-glutamine = pyridoxal 5'-phosphate + L-glutamate + phosphate + 3 H2O + H(+). It functions in the pathway cofactor biosynthesis; pyridoxal 5'-phosphate biosynthesis. In terms of biological role, catalyzes the formation of pyridoxal 5'-phosphate from ribose 5-phosphate (RBP), glyceraldehyde 3-phosphate (G3P) and ammonia. The ammonia is provided by PDX2. Can also use ribulose 5-phosphate and dihydroxyacetone phosphate as substrates, resulting from enzyme-catalyzed isomerization of RBP and G3P, respectively. Also plays an indirect role in resistance to singlet oxygen-generating photosensitizers. The chain is Probable pyridoxal 5'-phosphate synthase subunit PDX1 from Stellaria longipes (Longstalk starwort).